Here is a 320-residue protein sequence, read N- to C-terminus: Mitochondrial thiamine pyrophosphate carrier 1 (320 aa).

Solcar repeat units follow at residues 12–110, 119–205, and 213–308; these read GTRR…TTQA, PQPV…LRPS, and PFGS…TLRA. 6 helical membrane-spanning segments follow: residues 17–35, 91–107, 125–145, 180–197, 219–239, and 283–300; these read VVLA…VAPL, LMYV…YRTT, FVAG…LDLL, GCSA…LFFA, ALAG…LDLV, and GLTV…VTMW.

It belongs to the mitochondrial carrier (TC 2.A.29) family.

The protein resides in the mitochondrion inner membrane. Functionally, mitochondrial transporter that mediates uptake of thiamine pyrophosphate (ThPP) into mitochondria. The polypeptide is Mitochondrial thiamine pyrophosphate carrier 1 (tpc1) (Aspergillus terreus (strain NIH 2624 / FGSC A1156)).